A 132-amino-acid chain; its full sequence is MGGVNIYAIIESGGKQYKVTPGQLVEVDLLDLAEGDSIELDKVLMLNDGETVTIGSPTISGAKVTATVAGHIKGDKVFAYRFKAKTRNHKKMGHRQLYTVLTIGEILTGGAAEKPARKPRAKKTNEVTTDGA.

The disordered stretch occupies residues 111-132 (AAEKPARKPRAKKTNEVTTDGA).

Belongs to the bacterial ribosomal protein bL21 family. In terms of assembly, part of the 50S ribosomal subunit. Contacts protein L20.

This protein binds to 23S rRNA in the presence of protein L20. The polypeptide is Large ribosomal subunit protein bL21 (Dehalococcoides mccartyi (strain CBDB1)).